The chain runs to 284 residues: Pantothenate synthetase (284 aa).

An ATP-binding site is contributed by 30-37 (MGNLHDGH). Catalysis depends on H37, which acts as the Proton donor. Residue Q61 participates in (R)-pantoate binding. Q61 lines the beta-alanine pocket. 149–152 (GEKD) contacts ATP. Residue Q155 coordinates (R)-pantoate. ATP-binding positions include I178 and 186-189 (LSSR).

Belongs to the pantothenate synthetase family. In terms of assembly, homodimer.

It is found in the cytoplasm. It carries out the reaction (R)-pantoate + beta-alanine + ATP = (R)-pantothenate + AMP + diphosphate + H(+). It functions in the pathway cofactor biosynthesis; (R)-pantothenate biosynthesis; (R)-pantothenate from (R)-pantoate and beta-alanine: step 1/1. Catalyzes the condensation of pantoate with beta-alanine in an ATP-dependent reaction via a pantoyl-adenylate intermediate. This is Pantothenate synthetase from Salmonella choleraesuis (strain SC-B67).